The primary structure comprises 398 residues: Acetate kinase (398 aa).

Asn7 is a Mg(2+) binding site. Lys14 is a binding site for ATP. Arg91 contributes to the substrate binding site. Asp148 serves as the catalytic Proton donor/acceptor. ATP is bound by residues His208 to Gly212, Asp283 to Arg285, and Gly331 to His335. Residue Glu386 coordinates Mg(2+).

This sequence belongs to the acetokinase family. As to quaternary structure, homodimer. Requires Mg(2+) as cofactor. Mn(2+) is required as a cofactor.

It localises to the cytoplasm. The catalysed reaction is acetate + ATP = acetyl phosphate + ADP. It functions in the pathway metabolic intermediate biosynthesis; acetyl-CoA biosynthesis; acetyl-CoA from acetate: step 1/2. Catalyzes the formation of acetyl phosphate from acetate and ATP. Can also catalyze the reverse reaction. The sequence is that of Acetate kinase from Clostridium botulinum (strain Alaska E43 / Type E3).